The sequence spans 161 residues: Regulator of ribonuclease activity A (161 aa).

It belongs to the RraA family. As to quaternary structure, homotrimer. Binds to both RNA-binding sites in the C-terminal region of Rne and to RhlB.

The protein resides in the cytoplasm. In terms of biological role, globally modulates RNA abundance by binding to RNase E (Rne) and regulating its endonucleolytic activity. Can modulate Rne action in a substrate-dependent manner by altering the composition of the degradosome. Modulates RNA-binding and helicase activities of the degradosome. The chain is Regulator of ribonuclease activity A from Shewanella oneidensis (strain ATCC 700550 / JCM 31522 / CIP 106686 / LMG 19005 / NCIMB 14063 / MR-1).